The chain runs to 116 residues: UPF0102 protein PERMA_0362 (116 aa).

It belongs to the UPF0102 family.

The protein is UPF0102 protein PERMA_0362 of Persephonella marina (strain DSM 14350 / EX-H1).